We begin with the raw amino-acid sequence, 463 residues long: L-seryl-tRNA(Sec) selenium transferase (463 aa).

Position 295 is an N6-(pyridoxal phosphate)lysine (Lys295).

It belongs to the SelA family. As to quaternary structure, homodecamer; pentamer of dimers. Binds only one seryl-tRNA(Sec) per dimer. The cofactor is pyridoxal 5'-phosphate.

The protein localises to the cytoplasm. The enzyme catalyses L-seryl-tRNA(Sec) + selenophosphate + H(+) = L-selenocysteinyl-tRNA(Sec) + phosphate. It functions in the pathway aminoacyl-tRNA biosynthesis; selenocysteinyl-tRNA(Sec) biosynthesis; selenocysteinyl-tRNA(Sec) from L-seryl-tRNA(Sec) (bacterial route): step 1/1. Converts seryl-tRNA(Sec) to selenocysteinyl-tRNA(Sec) required for selenoprotein biosynthesis. This is L-seryl-tRNA(Sec) selenium transferase from Photorhabdus laumondii subsp. laumondii (strain DSM 15139 / CIP 105565 / TT01) (Photorhabdus luminescens subsp. laumondii).